Reading from the N-terminus, the 150-residue chain is uncharacterized protein (150 aa).

A Rhodanese domain is found at 19–93 (GAQDYVLVDV…SSKRLALRES (75 aa)).

This is an uncharacterized protein from Synechococcus elongatus.